We begin with the raw amino-acid sequence, 677 residues long: Methionine--tRNA ligase (677 aa).

The 'HIGH' region signature appears at proline 15 to histidine 25. Positions 146, 149, 159, and 162 each coordinate Zn(2+). The short motif at lysine 333 to serine 337 is the 'KMSKS' region element. Residue lysine 336 participates in ATP binding. Residues aspartate 575–lysine 677 enclose the tRNA-binding domain.

This sequence belongs to the class-I aminoacyl-tRNA synthetase family. MetG type 1 subfamily. Homodimer. Zn(2+) is required as a cofactor.

It is found in the cytoplasm. It catalyses the reaction tRNA(Met) + L-methionine + ATP = L-methionyl-tRNA(Met) + AMP + diphosphate. Functionally, is required not only for elongation of protein synthesis but also for the initiation of all mRNA translation through initiator tRNA(fMet) aminoacylation. This is Methionine--tRNA ligase (metG) from Escherichia coli (strain K12).